The sequence spans 405 residues: Tryptophan synthase beta chain (405 aa).

Lys98 carries the post-translational modification N6-(pyridoxal phosphate)lysine.

The protein belongs to the TrpB family. Tetramer of two alpha and two beta chains. It depends on pyridoxal 5'-phosphate as a cofactor.

It catalyses the reaction (1S,2R)-1-C-(indol-3-yl)glycerol 3-phosphate + L-serine = D-glyceraldehyde 3-phosphate + L-tryptophan + H2O. It participates in amino-acid biosynthesis; L-tryptophan biosynthesis; L-tryptophan from chorismate: step 5/5. The beta subunit is responsible for the synthesis of L-tryptophan from indole and L-serine. The sequence is that of Tryptophan synthase beta chain from Xanthomonas euvesicatoria pv. vesicatoria (strain 85-10) (Xanthomonas campestris pv. vesicatoria).